Consider the following 597-residue polypeptide: Aspartate--tRNA(Asp/Asn) ligase (597 aa).

Residue Glu175 participates in L-aspartate binding. The tract at residues 199 to 202 is aspartate; that stretch reads QQYK. Residues Arg221 and His456 each coordinate L-aspartate. 221–223 lines the ATP pocket; that stretch reads RDE. Glu490 provides a ligand contact to ATP. Arg497 lines the L-aspartate pocket. 542–545 contacts ATP; that stretch reads GVDR.

It belongs to the class-II aminoacyl-tRNA synthetase family. Type 1 subfamily. Homodimer.

It is found in the cytoplasm. The catalysed reaction is tRNA(Asx) + L-aspartate + ATP = L-aspartyl-tRNA(Asx) + AMP + diphosphate. Functionally, aspartyl-tRNA synthetase with relaxed tRNA specificity since it is able to aspartylate not only its cognate tRNA(Asp) but also tRNA(Asn). Reaction proceeds in two steps: L-aspartate is first activated by ATP to form Asp-AMP and then transferred to the acceptor end of tRNA(Asp/Asn). This is Aspartate--tRNA(Asp/Asn) ligase from Beijerinckia indica subsp. indica (strain ATCC 9039 / DSM 1715 / NCIMB 8712).